The sequence spans 201 residues: MNPEYDYLFKLLLIGDSGVGKSCLLLRFADDTYTESYISTIGVDFKIRTIELDGKTIKLQIWDTAGQERFRTVTSSYYRGAHGIIVVYDVTDQESYANVKQWLQEIDRYASENVNKLLVGNKSDLTTKKVVDNTTAKEFADSLGVPFLETSAKNATNVEQAFMTMAAEIKKRMGPGAASGGERPNLKIDSTPVKSASGGCC.

Met1 bears the N-acetylmethionine mark. Residues Ser17, Gly18, Val19, Gly20, Lys21, Ser22, Cys23, Tyr33, Thr34, Glu35, Ser36, Ser39, and Thr40 each contribute to the GTP site. Ser22 serves as a coordination point for Mg(2+). Positions 30-45 match the Switch 1 motif; sequence DDTYTESYISTIGVDF. Residues Thr40 and Asp63 each coordinate Mg(2+). Positions 64–83 are switch 2 region; required for interaction with REP1/CHM; sequence TAGQERFRTVTSSYYRGAHG. Residues 65 to 80 carry the Switch 2 motif; it reads AGQERFRTVTSSYYRG. GTP-binding residues include Gly66, Asn121, Lys122, Asp124, Ser151, Ala152, and Lys153. Positions 173-201 are disordered; sequence MGPGAASGGERPNLKIDSTPVKSASGGCC. S-geranylgeranyl cysteine attachment occurs at residues Cys200 and Cys201. Position 201 is a cysteine methyl ester (Cys201).

The protein belongs to the small GTPase superfamily. Rab family. Interacts with MICAL1 and MICAL2. Interacts (in GTP-bound form) with MICALCL, MICAL1 and MILCAL3. Interacts with GDI1; the interaction requires the GDP-bound state. Interacts with CHM/REP1; the interaction requires the GDP-bound form and is necessary for prenylation by GGTase II. Interacts with RabGAP TBC1D20. Interacts (in GDP-bound form) with lipid phosphatase MTMR6 (via GRAM domain); the interaction regulates MTMR6 recruitment to the endoplasmic reticulum-Golgi intermediate compartment. Interacts (in GDP-bound form) with lipid phosphatase MTMR7. It depends on Mg(2+) as a cofactor. In terms of processing, prenylated; by GGTase II, only after interaction of the substrate with Rab escort protein 1 (REP1).

The protein resides in the cytoplasm. The protein localises to the membrane. Its subcellular location is the preautophagosomal structure membrane. It localises to the perinuclear region. It carries out the reaction GTP + H2O = GDP + phosphate + H(+). Its activity is regulated as follows. Regulated by guanine nucleotide exchange factors (GEFs) which promote the exchange of bound GDP for free GTP. Regulated by GTPase activating proteins (GAPs) including TBC1D20 which increases the GTP hydrolysis activity. Inhibited by GDP dissociation inhibitors (GDIs). The small GTPases Rab are key regulators of intracellular membrane trafficking, from the formation of transport vesicles to their fusion with membranes. Rabs cycle between an inactive GDP-bound form and an active GTP-bound form that is able to recruit to membranes different set of downstream effectors directly responsible for vesicle formation, movement, tethering and fusion. Plays a role in the initial events of the autophagic vacuole development which take place at specialized regions of the endoplasmic reticulum. Regulates vesicular transport between the endoplasmic reticulum and successive Golgi compartments. Required to modulate the compacted morphology of the Golgi. Promotes the recruitment of lipid phosphatase MTMR6 to the endoplasmic reticulum-Golgi intermediate compartment. This Rattus norvegicus (Rat) protein is Ras-related protein Rab-1B (Rab1b).